A 176-amino-acid chain; its full sequence is Inner membrane assembly complex subunit 17 (176 aa).

The transit peptide at 1-28 directs the protein to the mitochondrion; it reads MLRVLPTSFKSISTRSAFRACQLSPLTV. Topologically, residues 29 to 98 are mitochondrial matrix; it reads YCPLKSSQGT…MSQEVSLKRF (70 aa). The helical transmembrane segment at 99 to 121 threads the bilayer; it reads VRPLWVFFLMSSTVYLILHYVWW. Over 122–176 the chain is Mitochondrial intermembrane; that stretch reads KLEVVEKEKELQSHVESLEMELDQTLKSQNQNVSSSQNNGNNKTNDKPWYRKWFF. A coiled-coil region spans residues 123 to 151; it reads LEVVEKEKELQSHVESLEMELDQTLKSQN. The span at 149-163 shows a compositional bias: low complexity; it reads SQNQNVSSSQNNGNN. The interval 149–168 is disordered; that stretch reads SQNQNVSSSQNNGNNKTNDK.

This sequence belongs to the INA17 family. In terms of assembly, component of the inner membrane assembly (INA) complex, composed of INA17 and INA22. Interacts with a subset of F(1)F(0)-ATP synthase subunits of the F(1)-domain and the peripheral stalk.

The protein localises to the mitochondrion inner membrane. Its function is as follows. Component of the INA complex (INAC) that promotes the biogenesis of mitochondrial F(1)F(0)-ATP synthase. INAC facilitates the assembly of the peripheral stalk and promotes the assembly of the catalytic F(1)-domain with the membrane-embedded F(0)-domain. The sequence is that of Inner membrane assembly complex subunit 17 from Zygosaccharomyces rouxii (strain ATCC 2623 / CBS 732 / NBRC 1130 / NCYC 568 / NRRL Y-229).